We begin with the raw amino-acid sequence, 614 residues long: Afadin- and alpha-actinin-binding protein (614 aa).

Coiled coils occupy residues M131–D227 and R266–S293. Phosphoserine is present on residues S290, S293, and S312. Residues L292 to D317 form a disordered region. Positions I374–L460 form a coiled coil. A phosphoserine mark is found at S536, S540, and S542.

This sequence belongs to the ADIP family. In terms of assembly, interacts with afadin and alpha-actinin. Interacts with VAV2. Interacts with SSX2 and SSX3. Does not interact with SSX1 and SSX4. Interacts with PCM1. Interacts with WRAP73. Widely expressed, with the highest expression in brain, intermediate expression in kidney, testis, spinal cord, liver, heart, lung, skeletal muscle, ovary, fetal liver and fetal brain, and little to no expression in pancreas and spleen. All specific brain regions showed intermediate to high expression, with highest expression in amygdala. Also expressed in fetal tissues, mainly in liver and brain.

The protein localises to the cell junction. Its subcellular location is the adherens junction. It is found in the nucleus. It localises to the cytoplasm. The protein resides in the cytoskeleton. The protein localises to the microtubule organizing center. Its subcellular location is the centrosome. It is found in the centriolar satellite. It localises to the cilium basal body. Belongs to an adhesion system, which plays a role in the organization of homotypic, interneuronal and heterotypic cell-cell adherens junctions (AJs). May connect the nectin-afadin and E-cadherin-catenin system through alpha-actinin and may be involved in organization of the actin cytoskeleton at AJs through afadin and alpha-actinin. Involved in cell movement: localizes at the leading edge of moving cells in response to PDGF and is required for the formation of the leading edge and the promotion of cell movement, possibly via activation of Rac signaling. Acts as a centrosome maturation factor, probably by maintaining the integrity of the pericentriolar material and proper microtubule nucleation at mitotic spindle poles. The function seems to implicate at least in part WRAP73; the SSX2IP:WRAP73 complex is proposed to act as regulator of spindle anchoring at the mitotic centrosome. Involved in ciliogenesis. It is required for targeted recruitment of the BBSome, CEP290, RAB8, and SSTR3 to the cilia. This is Afadin- and alpha-actinin-binding protein (SSX2IP) from Homo sapiens (Human).